We begin with the raw amino-acid sequence, 450 residues long: LanC-like protein 2 (450 aa).

Gly2 carries the N-myristoyl glycine lipid modification. Positions 2–15 (GETMSKRLKLHLGG) are interaction with inositol phospholipids. Residue Tyr198 is modified to Phosphotyrosine.

The protein belongs to the LanC-like protein family. In terms of assembly, interacts with an array of inositol phospholipids such as phosphatidylinositol 3-phosphate (PI3P), phosphatidylinositol 4-phosphate (PI4P) and phosphatidylinositol 5-phosphate (PI5P). PIP-binding enhances membrane association. Post-translationally, myristoylated. Essential for membrane association. Expressed in brain and testis.

It localises to the nucleus. Its subcellular location is the cytoplasm. The protein localises to the cell membrane. Necessary for abscisic acid (ABA) binding on the cell membrane and activation of the ABA signaling pathway in granulocytes. The polypeptide is LanC-like protein 2 (LANCL2) (Homo sapiens (Human)).